We begin with the raw amino-acid sequence, 524 residues long: Putative ribose/galactose/methyl galactoside import ATP-binding protein 1 (524 aa).

2 ABC transporter domains span residues 35-271 (LEVR…VGRE) and 281-520 (VPIG…RIMD). An ATP-binding site is contributed by 67–74 (GENGAGKS).

This sequence belongs to the ABC transporter superfamily. Carbohydrate importer 2 (CUT2) (TC 3.A.1.2) family.

It localises to the cell inner membrane. The catalysed reaction is D-ribose(out) + ATP + H2O = D-ribose(in) + ADP + phosphate + H(+). It catalyses the reaction D-galactose(out) + ATP + H2O = D-galactose(in) + ADP + phosphate + H(+). Its function is as follows. Part of an ABC transporter complex involved in carbohydrate import. Could be involved in ribose, galactose and/or methyl galactoside import. Responsible for energy coupling to the transport system. The polypeptide is Putative ribose/galactose/methyl galactoside import ATP-binding protein 1 (Burkholderia cenocepacia (strain HI2424)).